Here is a 162-residue protein sequence, read N- to C-terminus: Probable ergosterol biosynthetic protein 28 homolog (162 aa).

The next 4 membrane-spanning stretches (helical) occupy residues 7 to 25, 40 to 60, 69 to 89, and 96 to 116; these read AWMS…MCYA, LSRA…VLIF, IAHI…VFFY, and IVTV…LTFL.

This sequence belongs to the ERG28 family. As to expression, expressed in tissues including muscles, intestine and neurons.

The protein resides in the endoplasmic reticulum membrane. It is found in the cell projection. It localises to the dendrite. Functionally, promotes the translocation of slo-1 potassium ion channels from the endoplasmic reticulum to its final destination at the plasma membrane, probably by shielding from premature proteasomal degradation in the endoplasmic reticulum. Maintains the levels of slo-1 potassium ion channel at the presynaptic neurons. The chain is Probable ergosterol biosynthetic protein 28 homolog from Caenorhabditis elegans.